We begin with the raw amino-acid sequence, 414 residues long: Serine/threonine-protein kinase 32B (414 aa).

The 261-residue stretch at 23 to 283 folds into the Protein kinase domain; it reads FQILRAIGKG…LHDIQSVPYL (261 aa). ATP is bound by residues 29-37 and lysine 52; that span reads IGKGSFGKV. Aspartate 146 acts as the Proton acceptor in catalysis. Residues 374–396 are disordered; it reads QGQGSQLLDTDSRGGGQAQSKLQ.

Belongs to the protein kinase superfamily. Ser/Thr protein kinase family. Mg(2+) serves as cofactor.

It catalyses the reaction L-seryl-[protein] + ATP = O-phospho-L-seryl-[protein] + ADP + H(+). It carries out the reaction L-threonyl-[protein] + ATP = O-phospho-L-threonyl-[protein] + ADP + H(+). The chain is Serine/threonine-protein kinase 32B from Homo sapiens (Human).